A 306-amino-acid chain; its full sequence is UDP-3-O-acyl-N-acetylglucosamine deacetylase (306 aa).

The Zn(2+) site is built by H79, H238, and D242. The active-site Proton donor is H265.

This sequence belongs to the LpxC family. The cofactor is Zn(2+).

The enzyme catalyses a UDP-3-O-[(3R)-3-hydroxyacyl]-N-acetyl-alpha-D-glucosamine + H2O = a UDP-3-O-[(3R)-3-hydroxyacyl]-alpha-D-glucosamine + acetate. The protein operates within glycolipid biosynthesis; lipid IV(A) biosynthesis; lipid IV(A) from (3R)-3-hydroxytetradecanoyl-[acyl-carrier-protein] and UDP-N-acetyl-alpha-D-glucosamine: step 2/6. Its function is as follows. Catalyzes the hydrolysis of UDP-3-O-myristoyl-N-acetylglucosamine to form UDP-3-O-myristoylglucosamine and acetate, the committed step in lipid A biosynthesis. The protein is UDP-3-O-acyl-N-acetylglucosamine deacetylase of Shewanella pealeana (strain ATCC 700345 / ANG-SQ1).